The following is a 386-amino-acid chain: Succinate--CoA ligase [ADP-forming] subunit beta (386 aa).

In terms of domain architecture, ATP-grasp spans 9–244; that stretch reads KAVLRSYGVS…LDEEDAKEIE (236 aa). Residues Lys-46, 53-55, Glu-99, Cys-102, and Glu-107 contribute to the ATP site; that span reads GRG. Mg(2+) is bound by residues Asn-199 and Asp-213. Residues Asn-264 and 321–323 contribute to the substrate site; that span reads GIM.

It belongs to the succinate/malate CoA ligase beta subunit family. In terms of assembly, heterotetramer of two alpha and two beta subunits. Mg(2+) serves as cofactor.

It carries out the reaction succinate + ATP + CoA = succinyl-CoA + ADP + phosphate. The catalysed reaction is GTP + succinate + CoA = succinyl-CoA + GDP + phosphate. It functions in the pathway carbohydrate metabolism; tricarboxylic acid cycle; succinate from succinyl-CoA (ligase route): step 1/1. Succinyl-CoA synthetase functions in the citric acid cycle (TCA), coupling the hydrolysis of succinyl-CoA to the synthesis of either ATP or GTP and thus represents the only step of substrate-level phosphorylation in the TCA. The beta subunit provides nucleotide specificity of the enzyme and binds the substrate succinate, while the binding sites for coenzyme A and phosphate are found in the alpha subunit. This chain is Succinate--CoA ligase [ADP-forming] subunit beta, found in Bacillus thuringiensis (strain Al Hakam).